A 77-amino-acid chain; its full sequence is uncharacterized protein (77 aa).

The region spanning 13-67 (VLQYMVNNDYSLNQLALEIGVSPATLSRVLNGERRPGQLVIGKMLHYFNLKFEDL) is the HTH cro/C1-type domain. The segment at residues 24-43 (LNQLALEIGVSPATLSRVLN) is a DNA-binding region (H-T-H motif).

Its subcellular location is the cytoplasm. This is an uncharacterized protein from Bacillus subtilis (strain 168).